The sequence spans 530 residues: Ubiquitin carboxyl-terminal hydrolase 17-like protein 19 (530 aa).

The 296-residue stretch at 80–375 (AGLQNMGNTC…QAYVLFYIQK (296 aa)) folds into the USP domain. The active-site Nucleophile is C89. H334 (proton acceptor) is an active-site residue. Composition is skewed to basic and acidic residues over residues 382-392 (SESVSRGREPR) and 398-413 (DTDR…RDHP). Disordered stretches follow at residues 382–413 (SESV…RDHP) and 476–530 (KNHH…LVCQ). Residues 484-495 (SSLLKLSSTTPT) are compositionally biased toward low complexity. Residues 496–505 (HQESMNTGTL) show a composition bias toward polar residues. Residues 510-524 (GRARRSKGKNKHSKR) show a composition bias toward basic residues.

This sequence belongs to the peptidase C19 family. USP17 subfamily.

The protein resides in the nucleus. It is found in the endoplasmic reticulum. It carries out the reaction Thiol-dependent hydrolysis of ester, thioester, amide, peptide and isopeptide bonds formed by the C-terminal Gly of ubiquitin (a 76-residue protein attached to proteins as an intracellular targeting signal).. Deubiquitinating enzyme that removes conjugated ubiquitin from specific proteins to regulate different cellular processes that may include cell proliferation, progression through the cell cycle, apoptosis, cell migration, and the cellular response to viral infection. This is Ubiquitin carboxyl-terminal hydrolase 17-like protein 19 (USP17L19) from Homo sapiens (Human).